A 218-amino-acid polypeptide reads, in one-letter code: tRNA (cytidine(56)-2'-O)-methyltransferase (218 aa).

S-adenosyl-L-methionine-binding positions include L81, 106-110 (GAEKV), and 124-131 (IGNQPHSE). The segment at 170 to 218 (KVGEEGPSGGAPGVRAERGRGGRGEGVQGADEVRGHKRGATDRDLGDET) is disordered. Basic and acidic residues predominate over residues 200-218 (DEVRGHKRGATDRDLGDET).

The protein belongs to the aTrm56 family. As to quaternary structure, homodimer.

It is found in the cytoplasm. The catalysed reaction is cytidine(56) in tRNA + S-adenosyl-L-methionine = 2'-O-methylcytidine(56) in tRNA + S-adenosyl-L-homocysteine + H(+). In terms of biological role, specifically catalyzes the AdoMet-dependent 2'-O-ribose methylation of cytidine at position 56 in tRNAs. The sequence is that of tRNA (cytidine(56)-2'-O)-methyltransferase from Ignicoccus hospitalis (strain KIN4/I / DSM 18386 / JCM 14125).